A 105-amino-acid polypeptide reads, in one-letter code: UPF0145 protein CCNA_02462 (105 aa).

This sequence belongs to the UPF0145 family.

The sequence is that of UPF0145 protein CCNA_02462 from Caulobacter vibrioides (strain NA1000 / CB15N) (Caulobacter crescentus).